The chain runs to 45 residues: uncharacterized protein (45 aa).

This is an uncharacterized protein from Escherichia coli (Bacteriophage T4).